The following is a 473-amino-acid chain: Nuclear distribution protein PAC1 (473 aa).

The LisH domain occupies 9–41 (QAEELHKSIIAYFLSAKLPKSAAALREEIADSV). Residues 60–87 (TSVVRLQKKIMDLEARNSALQSELDSAT) are a coiled coil. Polar residues predominate over residues 80–93 (QSELDSATPTSLSR). The disordered stretch occupies residues 80 to 99 (QSELDSATPTSLSRRNQDPV). WD repeat units follow at residues 113-154 (SHRN…RTIK), 156-196 (HTRA…KNIR), 200-247 (GHDH…CVRT), 250-289 (GHVEWVRDVVPSPDGRFLFSAGDDRVARLWDVSSGETKST), 292-352 (GHEH…IKTL), 354-393 (GHDNWVRALVFHPGGKYLLSVSDDKTIRCWDLSQEFKCVR), 397-434 (DAHAFVTCIRWAPNIIKDAGGMGVNGDINGGGSLALSG), and 435-472 (VNGIIPGSKKEDPGGGAKLGIRCVIATGSVDLNVRVFA).

The protein belongs to the WD repeat LIS1/nudF family. Self-associates. Interacts with NDL1 and dynein.

It is found in the cytoplasm. The protein localises to the cytoskeleton. Its subcellular location is the spindle pole. Positively regulates the activity of the minus-end directed microtubule motor protein dynein. May enhance dynein-mediated microtubule sliding by targeting dynein to the microtubule plus end. Required for nuclear migration during vegetative growth as well as development. Required for retrograde early endosome (EE) transport from the hyphal tip. Required for localization of dynein to the mitotic spindle poles. Recruits additional proteins to the dynein complex at SPBs. This Ajellomyces dermatitidis (strain ER-3 / ATCC MYA-2586) (Blastomyces dermatitidis) protein is Nuclear distribution protein PAC1.